The following is a 371-amino-acid chain: Bifunctional enzyme IspD/IspF (371 aa).

Positions 1 to 210 are 2-C-methyl-D-erythritol 4-phosphate cytidylyltransferase; that stretch reads MLDISLIMLS…LNLPKPSWDI (210 aa). The tract at residues 211 to 371 is 2-C-methyl-D-erythritol 2,4-cyclodiphosphate synthase; sequence FNGNGFDVHE…NLKYFDWMKL (161 aa). Residues Asp217 and His219 each contribute to the a divalent metal cation site. 4-CDP-2-C-methyl-D-erythritol 2-phosphate is bound by residues 217–219 and 243–244; these read DVH and HS. A divalent metal cation is bound at residue His251. Residues 265–267, 270–274, 341–344, Phe348, and Arg351 each bind 4-CDP-2-C-methyl-D-erythritol 2-phosphate; these read DIG, FPDND, and TTTE.

The protein in the N-terminal section; belongs to the IspD/TarI cytidylyltransferase family. IspD subfamily. It in the C-terminal section; belongs to the IspF family. A divalent metal cation is required as a cofactor.

It carries out the reaction 2-C-methyl-D-erythritol 4-phosphate + CTP + H(+) = 4-CDP-2-C-methyl-D-erythritol + diphosphate. The catalysed reaction is 4-CDP-2-C-methyl-D-erythritol 2-phosphate = 2-C-methyl-D-erythritol 2,4-cyclic diphosphate + CMP. The protein operates within isoprenoid biosynthesis; isopentenyl diphosphate biosynthesis via DXP pathway; isopentenyl diphosphate from 1-deoxy-D-xylulose 5-phosphate: step 2/6. It functions in the pathway isoprenoid biosynthesis; isopentenyl diphosphate biosynthesis via DXP pathway; isopentenyl diphosphate from 1-deoxy-D-xylulose 5-phosphate: step 4/6. Its function is as follows. Bifunctional enzyme that catalyzes the formation of 4-diphosphocytidyl-2-C-methyl-D-erythritol from CTP and 2-C-methyl-D-erythritol 4-phosphate (MEP) (IspD), and catalyzes the conversion of 4-diphosphocytidyl-2-C-methyl-D-erythritol 2-phosphate (CDP-ME2P) to 2-C-methyl-D-erythritol 2,4-cyclodiphosphate (ME-CPP) with a corresponding release of cytidine 5-monophosphate (CMP) (IspF). This chain is Bifunctional enzyme IspD/IspF, found in Campylobacter lari (strain RM2100 / D67 / ATCC BAA-1060).